A 205-amino-acid chain; its full sequence is MESMKQVVVATKNMGKVREFAELFERFDLEVKSLHDFPHIEEVEETGETFEENAILKADSLSRQLNAIVIADDSGLIVDALNGKPGVYSARFAGEPKDDQANIDKVLQELNEIPFDKRKARFYCALAVAFPEGDKKPVIVNGTCEGFILEQRRGENGFGYDPIFYVEEYKKAMAELSSDEKNAISHRGRALRKLEEKIPEWFLGE.

Position 11 to 16 (11 to 16 (TKNMGK)) interacts with substrate. Mg(2+) is bound by residues E44 and D73. Residue D73 is the Proton acceptor of the active site. Substrate is bound by residues S74, 158–161 (FGYD), K181, and 186–187 (HR).

It belongs to the HAM1 NTPase family. Homodimer. Requires Mg(2+) as cofactor.

The enzyme catalyses XTP + H2O = XMP + diphosphate + H(+). The catalysed reaction is dITP + H2O = dIMP + diphosphate + H(+). It catalyses the reaction ITP + H2O = IMP + diphosphate + H(+). In terms of biological role, pyrophosphatase that catalyzes the hydrolysis of nucleoside triphosphates to their monophosphate derivatives, with a high preference for the non-canonical purine nucleotides XTP (xanthosine triphosphate), dITP (deoxyinosine triphosphate) and ITP. Seems to function as a house-cleaning enzyme that removes non-canonical purine nucleotides from the nucleotide pool, thus preventing their incorporation into DNA/RNA and avoiding chromosomal lesions. The polypeptide is dITP/XTP pyrophosphatase (Bacillus cereus (strain ATCC 14579 / DSM 31 / CCUG 7414 / JCM 2152 / NBRC 15305 / NCIMB 9373 / NCTC 2599 / NRRL B-3711)).